The chain runs to 143 residues: AP-2 complex subunit sigma (143 aa).

It belongs to the adaptor complexes small subunit family. In terms of assembly, adaptor protein complex 2 (AP-2) is a heterotetramer composed of two large adaptins (alpha-type subunit APL3 and beta-type subunit APL1), a medium chain (mu-type subunit APM4) and a small adaptin (sigma-type subunit APS2).

It is found in the cell membrane. The protein localises to the membrane. The protein resides in the coated pit. Functionally, component of the adaptor complexes which link clathrin to receptors in coated vesicles. Clathrin-associated protein complexes are believed to interact with the cytoplasmic tails of membrane proteins, leading to their selection and concentration. This is AP-2 complex subunit sigma (APS2) from Gibberella zeae (strain ATCC MYA-4620 / CBS 123657 / FGSC 9075 / NRRL 31084 / PH-1) (Wheat head blight fungus).